We begin with the raw amino-acid sequence, 204 residues long: Somatotropin (204 aa).

An N-terminal signal peptide occupies residues 1 to 17 (MDRVLLLLSVLTLGVSS). Pyrrolidone carboxylic acid is present on Q18. H36 contacts Zn(2+). C69 and C177 are oxidised to a cystine. Zn(2+) is bound at residue E186. C194 and C202 are oxidised to a cystine.

This sequence belongs to the somatotropin/prolactin family.

Its subcellular location is the secreted. Functionally, growth hormone plays an important role in growth control and is involved in the regulation of several anabolic processes. Implicated as an osmoregulatory substance important for seawater adaptation. This is Somatotropin (gh) from Larimichthys crocea (Large yellow croaker).